Reading from the N-terminus, the 556-residue chain is 2-isopropylmalate synthase (556 aa).

The region spanning 33-307 (PIWCSSDLRD…HPQLDFSDID (275 aa)) is the Pyruvate carboxyltransferase domain. Asp42, His246, His248, and Asn282 together coordinate Mg(2+). Residues 439–556 (ATSPYALASH…AVTQAEAKAA (118 aa)) are regulatory domain.

It belongs to the alpha-IPM synthase/homocitrate synthase family. LeuA type 2 subfamily. In terms of assembly, homodimer. The cofactor is Mg(2+).

Its subcellular location is the cytoplasm. The enzyme catalyses 3-methyl-2-oxobutanoate + acetyl-CoA + H2O = (2S)-2-isopropylmalate + CoA + H(+). The protein operates within amino-acid biosynthesis; L-leucine biosynthesis; L-leucine from 3-methyl-2-oxobutanoate: step 1/4. Its function is as follows. Catalyzes the condensation of the acetyl group of acetyl-CoA with 3-methyl-2-oxobutanoate (2-ketoisovalerate) to form 3-carboxy-3-hydroxy-4-methylpentanoate (2-isopropylmalate). This is 2-isopropylmalate synthase from Pseudomonas paraeruginosa (strain DSM 24068 / PA7) (Pseudomonas aeruginosa (strain PA7)).